The chain runs to 277 residues: 2-dehydro-3-deoxyphosphooctonate aldolase (277 aa).

This sequence belongs to the KdsA family.

The protein localises to the cytoplasm. The enzyme catalyses D-arabinose 5-phosphate + phosphoenolpyruvate + H2O = 3-deoxy-alpha-D-manno-2-octulosonate-8-phosphate + phosphate. It participates in carbohydrate biosynthesis; 3-deoxy-D-manno-octulosonate biosynthesis; 3-deoxy-D-manno-octulosonate from D-ribulose 5-phosphate: step 2/3. Its pathway is bacterial outer membrane biogenesis; lipopolysaccharide biosynthesis. In Brucella canis (strain ATCC 23365 / NCTC 10854 / RM-666), this protein is 2-dehydro-3-deoxyphosphooctonate aldolase.